The sequence spans 31 residues: Cycloviolacin-O19 (31 aa).

Residues 1 to 31 (GTLPCGESCVWIPCISSVVGCSCKSKVCYKD) constitute a cross-link (cyclopeptide (Gly-Asp)). 3 disulfides stabilise this stretch: cysteine 5-cysteine 21, cysteine 9-cysteine 23, and cysteine 14-cysteine 28.

In terms of processing, this is a cyclic peptide. Expressed in petioles and runners but not in leaves, petals and roots (at protein level).

Probably participates in a plant defense mechanism. The polypeptide is Cycloviolacin-O19 (Viola odorata (Sweet violet)).